We begin with the raw amino-acid sequence, 231 residues long: Chromosome partition protein MukE (231 aa).

Residues 197–231 (RDGEAMPIEGGLSLDDSENDETSDNSAEGTGDEQP) are disordered.

Belongs to the MukE family. As to quaternary structure, interacts, and probably forms a ternary complex, with MukF and MukB. The complex formation is stimulated by calcium or magnesium.

The protein resides in the cytoplasm. The protein localises to the nucleoid. In terms of biological role, involved in chromosome condensation, segregation and cell cycle progression. May participate in facilitating chromosome segregation by condensation DNA from both sides of a centrally located replisome during cell division. Probably acts via its interaction with MukB and MukF. The polypeptide is Chromosome partition protein MukE (Photorhabdus laumondii subsp. laumondii (strain DSM 15139 / CIP 105565 / TT01) (Photorhabdus luminescens subsp. laumondii)).